We begin with the raw amino-acid sequence, 536 residues long: Protein ST7 homolog (536 aa).

2 helical membrane-spanning segments follow: residues 3–23 and 49–69; these read CSWTFLWLLWIALVAVLLFAL and FYVALTGTSSLVSGIILIFEW. Positions 191–218 form a coiled coil; the sequence is LAEEESETVSQAENLLRRALRAIESTLN. The chain crosses the membrane as a helical span at residues 465–485; that stretch reads TLMMLLQTFICLAICILAVLA.

Belongs to the ST7 family.

It localises to the membrane. This chain is Protein ST7 homolog, found in Caenorhabditis elegans.